The primary structure comprises 218 residues: Eukaryotic translation initiation factor 4E-1 (218 aa).

Residues 1–11 (MQTEQPPKESQ) are compositionally biased toward basic and acidic residues. Disordered regions lie at residues 1–20 (MQTEQPPKESQTENTVSEPQ) and 198–218 (FSAHEDSSKSGSTRAKTRMSV). Residues 206–218 (KSGSTRAKTRMSV) are compositionally biased toward polar residues.

The protein belongs to the eukaryotic initiation factor 4E family. EIF4F is a multi-subunit complex, the composition of which varies with external and internal environmental conditions. It is composed of at least eIF4A, eIF4E and eIF4G. eIF4E is also known to interact with other partners.

Recognizes and binds the 7-methylguanosine-containing mRNA cap during an early step in the initiation of protein synthesis and facilitates ribosome binding by inducing the unwinding of the mRNAs secondary structures. The chain is Eukaryotic translation initiation factor 4E-1 (tif451) from Schizosaccharomyces pombe (strain 972 / ATCC 24843) (Fission yeast).